A 24-amino-acid chain; its full sequence is Poly-His-poly-Gly peptide 1 (24 aa).

The segment covering 1–13 has biased composition (basic residues); it reads EDDHHHHHHHHHG. The disordered stretch occupies residues 1–24; that stretch reads EDDHHHHHHHHHGVGGGGGGGGGG. Residues 14-24 are compositionally biased toward gly residues; the sequence is VGGGGGGGGGG.

As to expression, expressed by the venom gland.

It localises to the secreted. Functionally, may serve as a metalloproteinase inhibitor during glandular storage. Their inhibition may be instantly disengaged, by dilution or physiochemical change, when venom is injected into tissue of the victim. The sequence is that of Poly-His-poly-Gly peptide 1 from Atheris chlorechis (Western bush viper).